Consider the following 27-residue polypeptide: Phospholipase A2 P-elapitoxin-Aa1a alpha chain (27 aa).

It belongs to the phospholipase A2 family. Group I subfamily. Heterotrimer of alpha, beta and gamma chains, each related to PLA2. The cofactor is Ca(2+). As to expression, expressed by the venom gland.

It localises to the secreted. The catalysed reaction is a 1,2-diacyl-sn-glycero-3-phosphocholine + H2O = a 1-acyl-sn-glycero-3-phosphocholine + a fatty acid + H(+). Functionally, heterotrimer: presynaptic neurotoxin. Inhibits nerve-evoked twitch contractions but not responses to cholinergic agonists acetylcholine and carbachol and to depolarizing agonist KCl. Causes a fade in tetanic contractions. Displays a triphasic mode of action with depression, enhancement and blockade of neurotransmission. Does not display myotoxic activity such as changes in baseline muscle tension or inhibition of directly stimulated muscle twitches. All subunits are necessary for maximum toxicity. Monomer: Snake venom phospholipase A2 (PLA2) alpha chain that has enzymatic activity. PLA2 catalyzes the calcium-dependent hydrolysis of the 2-acyl groups in 3-sn-phosphoglycerides. This is Phospholipase A2 P-elapitoxin-Aa1a alpha chain from Acanthophis antarcticus (Common death adder).